The primary structure comprises 650 residues: PTS system mannose-specific EIIBCA component (650 aa).

The PTS EIIB type-2 domain occupies 1–98 (MKLLAITSCP…PEELIQKALN (98 aa)). Residue cysteine 9 is the Phosphocysteine intermediate; for EIIB activity of the active site. The PTS EIIC type-2 domain maps to 123–456 (IYRHLMNGVS…SLVTALFVNV (334 aa)). The next 7 helical transmembrane spans lie at 133-153 (FMVP…TLGG), 174-194 (IGSA…AYSI), 199-219 (GLVP…YDSA), 221-241 (GAGF…ALWI), 256-276 (IIII…FLIG), 297-317 (SSIL…GGPV), and 336-356 (IMGP…IATF). The residue at position 365 (serine 365) is a Phosphoserine. Helical transmembrane passes span 369–389 (MGKA…IPFA), 396–416 (VIPS…IGNV), and 436–456 (VLMF…FVNV). Residues 504 to 649 (DIISPELIEP…EEAYKLLEEI (146 aa)) form the PTS EIIA type-2 domain. Histidine 566 functions as the Tele-phosphohistidine intermediate; for EIIA activity in the catalytic mechanism.

It is found in the cell membrane. The enzyme catalyses D-mannose(out) + N(pros)-phospho-L-histidyl-[protein] = D-mannose 6-phosphate(in) + L-histidyl-[protein]. Its function is as follows. The phosphoenolpyruvate-dependent sugar phosphotransferase system (sugar PTS), a major carbohydrate active -transport system, catalyzes the phosphorylation of incoming sugar substrates concomitantly with their translocation across the cell membrane. This system is involved in mannose transport. This chain is PTS system mannose-specific EIIBCA component (manP), found in Bacillus subtilis (strain 168).